A 567-amino-acid chain; its full sequence is Glucose-6-phosphate isomerase, cytosolic B (567 aa).

D-glucose 6-phosphate is bound by residues 156–157, 212–217, Gln356, Glu360, His391, and Lys516; these read GS and SKTFTT. The active-site Proton donor is the Glu360. Residues His391 and Lys516 contribute to the active site.

It belongs to the GPI family. In terms of assembly, homodimer.

It is found in the cytoplasm. It carries out the reaction alpha-D-glucose 6-phosphate = beta-D-fructose 6-phosphate. The protein operates within carbohydrate degradation; glycolysis; D-glyceraldehyde 3-phosphate and glycerone phosphate from D-glucose: step 2/4. In terms of biological role, catalyzes the conversion of glucose-6-phosphate to fructose-6-phosphate, the second step in glycolysis, and the reverse reaction during gluconeogenesis. This is Glucose-6-phosphate isomerase, cytosolic B from Oryza sativa subsp. japonica (Rice).